The chain runs to 346 residues: Selenoprotein V (346 aa).

Disordered regions lie at residues 1–40 and 151–206; these read MNNQ…VRTR and LDPP…PGPT. Over residues 151–162 the composition is skewed to pro residues; it reads LDPPPEPAPELP. The cysteinyl-selenocysteine (Cys-Sec); redox-active cross-link spans 270-273; that stretch reads CGLU. A non-standard amino acid (selenocysteine) is located at residue Sec-273.

This sequence belongs to the SelWTH family. Truncated SELENOV proteins produced by failed UGA/Sec decoding are ubiquitinated by the CRL2(APPBP2) complex, which recognizes the glycine (Gly) at the C-terminus of truncated SELENOV proteins. In terms of tissue distribution, testis specific.

In terms of biological role, may be involved in a redox-related process. The chain is Selenoprotein V from Homo sapiens (Human).